We begin with the raw amino-acid sequence, 300 residues long: Transacylase cctO (300 aa).

The chain crosses the membrane as a helical span at residues 52 to 72 (IVYVSLTFFVVSIGLNFILAI). Short sequence motifs (HXXHC) lie at residues 185–189 (HQLGC) and 225–229 (HVDQC). N-linked (GlcNAc...) asparagine glycosylation is present at Asn-270.

This sequence belongs to the ustYa family.

It localises to the membrane. It participates in mycotoxin biosynthesis. Transacylase; part of the gene cluster that mediates the biosynthesis of the mycotoxin cyclochlorotine, a hepatotoxic and carcinogenic cyclic chlorinated pentapeptide. Within the pathway, cctO catalyzes the intramolecular O,N-transacylation from isocyclochlorotine to cyclochlorotine. The NRPS cctN initially catalyzes the condensation of L-serine (Ser), Pro, L-2-aminobutyrate (2Abu), Ser, and beta-Phe in this order to produce isocyclotine. After the dichlorination of Pro2 catalyzed by cctP2 to produce isocyclochlorotine, the cctO-mediated transacylation of isocyclochlorotine can furnish cyclochlorotine. The subsequent hydroxylation of cyclochlorotine by cctR yields hydroxycyclochlorotine as the final product. CctP1 probably acts as a phenylalanine aminomutase and provides the uncommon building block beta-Phe. Furthermore, 2Abu can be synthesized from threonine by one of the threonine dehydratases and transaminases localized outside of the cluster. The functions of the remaining proteins encoded by the cluster, cctM and cctT, have not been identified yet. This chain is Transacylase cctO, found in Talaromyces islandicus (Penicillium islandicum).